The following is a 398-amino-acid chain: Nicotinate phosphoribosyltransferase (398 aa).

Phosphohistidine; by autocatalysis is present on H214.

Belongs to the NAPRTase family. Post-translationally, transiently phosphorylated on a His residue during the reaction cycle. Phosphorylation strongly increases the affinity for substrates and increases the rate of nicotinate D-ribonucleotide production. Dephosphorylation regenerates the low-affinity form of the enzyme, leading to product release.

The enzyme catalyses nicotinate + 5-phospho-alpha-D-ribose 1-diphosphate + ATP + H2O = nicotinate beta-D-ribonucleotide + ADP + phosphate + diphosphate. Its pathway is cofactor biosynthesis; NAD(+) biosynthesis; nicotinate D-ribonucleotide from nicotinate: step 1/1. In terms of biological role, catalyzes the synthesis of beta-nicotinate D-ribonucleotide from nicotinate and 5-phospho-D-ribose 1-phosphate at the expense of ATP. This is Nicotinate phosphoribosyltransferase from Xanthomonas campestris pv. campestris (strain B100).